The following is a 341-amino-acid chain: UDP-N-acetylglucosamine--N-acetylmuramyl-(pentapeptide) pyrophosphoryl-undecaprenol N-acetylglucosamine transferase (341 aa).

UDP-N-acetyl-alpha-D-glucosamine contacts are provided by residues 10-12, N124, S177, and Q275; that span reads TGG.

This sequence belongs to the glycosyltransferase 28 family. MurG subfamily.

The protein localises to the cell inner membrane. The catalysed reaction is di-trans,octa-cis-undecaprenyl diphospho-N-acetyl-alpha-D-muramoyl-L-alanyl-D-glutamyl-meso-2,6-diaminopimeloyl-D-alanyl-D-alanine + UDP-N-acetyl-alpha-D-glucosamine = di-trans,octa-cis-undecaprenyl diphospho-[N-acetyl-alpha-D-glucosaminyl-(1-&gt;4)]-N-acetyl-alpha-D-muramoyl-L-alanyl-D-glutamyl-meso-2,6-diaminopimeloyl-D-alanyl-D-alanine + UDP + H(+). The protein operates within cell wall biogenesis; peptidoglycan biosynthesis. Cell wall formation. Catalyzes the transfer of a GlcNAc subunit on undecaprenyl-pyrophosphoryl-MurNAc-pentapeptide (lipid intermediate I) to form undecaprenyl-pyrophosphoryl-MurNAc-(pentapeptide)GlcNAc (lipid intermediate II). The sequence is that of UDP-N-acetylglucosamine--N-acetylmuramyl-(pentapeptide) pyrophosphoryl-undecaprenol N-acetylglucosamine transferase from Campylobacter hominis (strain ATCC BAA-381 / DSM 21671 / CCUG 45161 / LMG 19568 / NCTC 13146 / CH001A).